The following is a 582-amino-acid chain: Threonine--tRNA ligase (582 aa).

The interval 185 to 478 is catalytic; it reads DHRKLGKELE…LTEQYGGAFP (294 aa). Residues Cys278, His329, and His455 each coordinate Zn(2+).

It belongs to the class-II aminoacyl-tRNA synthetase family. In terms of assembly, homodimer. The cofactor is Zn(2+).

It localises to the cytoplasm. The catalysed reaction is tRNA(Thr) + L-threonine + ATP = L-threonyl-tRNA(Thr) + AMP + diphosphate + H(+). Its function is as follows. Catalyzes the attachment of threonine to tRNA(Thr) in a two-step reaction: L-threonine is first activated by ATP to form Thr-AMP and then transferred to the acceptor end of tRNA(Thr). Also edits incorrectly charged L-seryl-tRNA(Thr). The chain is Threonine--tRNA ligase from Dehalococcoides mccartyi (strain CBDB1).